The following is a 55-amino-acid chain: MAKGIREKIKLVSSAGTGHFYTTTKNKRTKPEKLELKKFDPVVRQHVLYKEAKIK.

Belongs to the bacterial ribosomal protein bL33 family.

In Enterobacter sp. (strain 638), this protein is Large ribosomal subunit protein bL33.